Reading from the N-terminus, the 221-residue chain is MESFRYHDLGRIAYADALEYQTAAFEVLLDAKATGKKEDNQLFFCEHLPVLTIGKSGKDSNLLIPEETLRERGVSFYHINRGGDITYHGPGQITGYPVFDLEYWNLGLKQYIHMLEETIIRFLSLYDLKGERLEGATGVWLDPEVPGRARKICAIGVKSSRFVTMHGFALNINTDLSYFSLINPCGFTDKGVTSLAMELGVPQDFELAKSQLRSIFMEIFA.

In terms of domain architecture, BPL/LPL catalytic spans 36 to 221 (KKEDNQLFFC…LRSIFMEIFA (186 aa)). Residues 81–88 (RGGDITYH), 154–156 (AIG), and 167–169 (GFA) each bind substrate. The active-site Acyl-thioester intermediate is the Cys-185.

The protein belongs to the LipB family.

It is found in the cytoplasm. It carries out the reaction octanoyl-[ACP] + L-lysyl-[protein] = N(6)-octanoyl-L-lysyl-[protein] + holo-[ACP] + H(+). The protein operates within protein modification; protein lipoylation via endogenous pathway; protein N(6)-(lipoyl)lysine from octanoyl-[acyl-carrier-protein]: step 1/2. Its function is as follows. Catalyzes the transfer of endogenously produced octanoic acid from octanoyl-acyl-carrier-protein onto the lipoyl domains of lipoate-dependent enzymes. Lipoyl-ACP can also act as a substrate although octanoyl-ACP is likely to be the physiological substrate. In Parabacteroides distasonis (strain ATCC 8503 / DSM 20701 / CIP 104284 / JCM 5825 / NCTC 11152), this protein is Octanoyltransferase.